The primary structure comprises 630 residues: Transposase B from transposon PsiTn554 (630 aa).

Residues 216 to 302 (TYFKQLVKRY…ILEGLFSTLH (87 aa)) enclose the Core-binding (CB) domain. Residues 326–513 (AKPRFIDEFV…FDETLKNEFT (188 aa)) enclose the Tyr recombinase domain. Active-site residues include arginine 363, lysine 391, histidine 465, arginine 468, and histidine 491. Residue tyrosine 500 is the O-(3'-phospho-DNA)-tyrosine intermediate of the active site.

Belongs to the 'phage' integrase family.

In Staphylococcus aureus, this protein is Transposase B from transposon PsiTn554 (tnpB).